The primary structure comprises 351 residues: Nicotinate-nucleotide--dimethylbenzimidazole phosphoribosyltransferase (351 aa).

Glu-318 serves as the catalytic Proton acceptor.

Belongs to the CobT family.

The enzyme catalyses 5,6-dimethylbenzimidazole + nicotinate beta-D-ribonucleotide = alpha-ribazole 5'-phosphate + nicotinate + H(+). It participates in nucleoside biosynthesis; alpha-ribazole biosynthesis; alpha-ribazole from 5,6-dimethylbenzimidazole: step 1/2. Its function is as follows. Catalyzes the synthesis of alpha-ribazole-5'-phosphate from nicotinate mononucleotide (NAMN) and 5,6-dimethylbenzimidazole (DMB). The protein is Nicotinate-nucleotide--dimethylbenzimidazole phosphoribosyltransferase of Chloroflexus aurantiacus (strain ATCC 29366 / DSM 635 / J-10-fl).